The primary structure comprises 293 residues: Glutamyl-Q tRNA(Asp) synthetase (293 aa).

L-glutamate-binding positions include 26–30 and D62; that span reads RYAPS. A 'HIGH' region motif is present at residues 29–39; sequence PSPTGALHLGN. Residues C118, C120, Y131, and C135 each coordinate Zn(2+). L-glutamate is bound by residues Y178 and R196. Positions 234 to 238 match the 'KMSKS' region motif; that stretch reads KLSKR. K237 serves as a coordination point for ATP.

It belongs to the class-I aminoacyl-tRNA synthetase family. GluQ subfamily. The cofactor is Zn(2+).

Its function is as follows. Catalyzes the tRNA-independent activation of glutamate in presence of ATP and the subsequent transfer of glutamate onto a tRNA(Asp). Glutamate is transferred on the 2-amino-5-(4,5-dihydroxy-2-cyclopenten-1-yl) moiety of the queuosine in the wobble position of the QUC anticodon. The protein is Glutamyl-Q tRNA(Asp) synthetase of Parasynechococcus marenigrum (strain WH8102).